Consider the following 353-residue polypeptide: Tsukushi (353 aa).

The signal sequence occupies residues 1–17 (MLCTLFLLLLALGIVQT). Residues 18–59 (TRPCFPGCQCEEETFGLFDSFSLIRVDCSSLGPHIVPVPIPL) form the LRRNT domain. 10 LRR repeats span residues 60–80 (DTAH…SVLG), 86–107 (TLAG…AFSR), 110–131 (YLES…VFTS), 133–154 (PLSD…AFTT), 160–180 (ALHV…PARA), 186–207 (TIQS…RDLP), 208–228 (LRYL…AFMG), 231–253 (GLTH…GFRE), 256–277 (GLQV…EVFS), and 281–302 (LLQE…LLHH). Asparagine 75 is a glycosylation site (N-linked (GlcNAc...) asparagine). N-linked (GlcNAc...) asparagine glycosylation occurs at asparagine 138. Residue asparagine 191 is glycosylated (N-linked (GlcNAc...) asparagine).

Interacts with FZD4 (via FZ domain); competes with WNT2B for binding to FZD4, inhibiting Wnt signaling and repressing peripheral eye development. Interacts with TGFB1; the interaction contributes to regulation of the hair cycle. Interacts with netrin. Interacts with CCN2. In terms of tissue distribution, expressed at high levels in the liver, small intestine and placenta. Not or barely detectable in other tissues, including whole pancreas, adipose tissues, skeletal muscle, kidney, spleen, brain, lung and testis.

Its subcellular location is the secreted. Its function is as follows. Contributes to various developmental events and other processes such as wound healing and cholesterol homeostasis through its interactions with multiple signaling pathways. Wnt signaling inhibitor which competes with WNT2B for binding to Wnt receptor FZD4 and represses WNT2B-dependent development of the peripheral eye. Plays a role in regulating the hair cycle by controlling TGFB1 signaling. Required for the development of the anterior commissure in the brain by inhibiting neurite outgrowth. Essential for terminal differentiation of hippocampal neural stem cells. Plays a role in regulating bone elongation and bone mass by modulating growth plate chondrocyte function and overall body size. Required for development of the inner ear through its involvement in stereocilia formation in inner hair cells. Facilitates wound healing by inhibiting secretion of TGFB1 from macrophages which prevents myofibroblast differentiation, maintaining inflammatory cell quiescence. Plays a role in cholesterol homeostasis by reducing circulating high-density lipoprotein cholesterol, lowering cholesterol efflux capacity and decreasing cholesterol-to-bile acid conversion in the liver. In one study, shown to negatively regulate sympathetic innervation in brown fat, leading to reduced energy expenditure. In another study, shown not to affect brown fat thermogenic capacity, body weight gain or glucose homeostasis. The chain is Tsukushi (Tsku) from Rattus norvegicus (Rat).